Here is a 397-residue protein sequence, read N- to C-terminus: Nuclear pore complex-interacting protein family member B2 (397 aa).

Positions 256–397 are disordered; that stretch reads NRMGHQPPPP…KLRTGHCTQA (142 aa). Positions 267-277 are enriched in polar residues; sequence QQHSITDNSLS. Low complexity predominate over residues 278-287; sequence LKTPPECLLT. Basic residues predominate over residues 382 to 391; sequence KRRRLSKLRT.

This sequence belongs to the NPIP family.

The protein resides in the nucleus. In Homo sapiens (Human), this protein is Nuclear pore complex-interacting protein family member B2.